The sequence spans 161 residues: Urease accessory protein UreE (161 aa).

This sequence belongs to the UreE family.

Its subcellular location is the cytoplasm. Involved in urease metallocenter assembly. Binds nickel. Probably functions as a nickel donor during metallocenter assembly. The protein is Urease accessory protein UreE of Arthrobacter sp. (strain FB24).